The sequence spans 525 residues: ATP synthase subunit alpha (525 aa).

An ATP-binding site is contributed by 171–178; that stretch reads GDRQTGKS.

It belongs to the ATPase alpha/beta chains family. In terms of assembly, F-type ATPases have 2 components, CF(1) - the catalytic core - and CF(0) - the membrane proton channel. CF(1) has five subunits: alpha(3), beta(3), gamma(1), delta(1), epsilon(1). CF(0) has three main subunits: a(1), b(2) and c(9-12). The alpha and beta chains form an alternating ring which encloses part of the gamma chain. CF(1) is attached to CF(0) by a central stalk formed by the gamma and epsilon chains, while a peripheral stalk is formed by the delta and b chains.

It is found in the cell inner membrane. The enzyme catalyses ATP + H2O + 4 H(+)(in) = ADP + phosphate + 5 H(+)(out). Produces ATP from ADP in the presence of a proton gradient across the membrane. The alpha chain is a regulatory subunit. The protein is ATP synthase subunit alpha of Flavobacterium psychrophilum (strain ATCC 49511 / DSM 21280 / CIP 103535 / JIP02/86).